The following is a 113-amino-acid chain: Retrotransposon Gag-like protein 8B (113 aa).

This sequence belongs to the FAM127 family.

The protein is Retrotransposon Gag-like protein 8B (RTL8B) of Homo sapiens (Human).